A 200-amino-acid chain; its full sequence is Cytochrome c biogenesis ATP-binding export protein CcmA (200 aa).

Positions 3 to 199 constitute an ABC transporter domain; that stretch reads LSGRRVICVR…DSRELRIGGV (197 aa). Position 35–42 (35–42) interacts with ATP; that stretch reads GRNGSGKT.

The protein belongs to the ABC transporter superfamily. CcmA exporter (TC 3.A.1.107) family. In terms of assembly, the complex is composed of two ATP-binding proteins (CcmA) and two transmembrane proteins (CcmB).

The protein resides in the cell inner membrane. The enzyme catalyses heme b(in) + ATP + H2O = heme b(out) + ADP + phosphate + H(+). Part of the ABC transporter complex CcmAB involved in the biogenesis of c-type cytochromes; once thought to export heme, this seems not to be the case, but its exact role is uncertain. Responsible for energy coupling to the transport system. This Bradyrhizobium diazoefficiens (strain JCM 10833 / BCRC 13528 / IAM 13628 / NBRC 14792 / USDA 110) protein is Cytochrome c biogenesis ATP-binding export protein CcmA.